A 244-amino-acid chain; its full sequence is Mediator of RNA polymerase II transcription subunit 8 (244 aa).

A coiled-coil region spans residues 6-30 (QEQLKTLEQSRQRLVQLTRSLASLI).

It belongs to the Mediator complex subunit 8 family. As to quaternary structure, component of the Mediator complex.

It localises to the nucleus. Component of the Mediator complex, a coactivator involved in the regulated transcription of nearly all RNA polymerase II-dependent genes. Mediator functions as a bridge to convey information from gene-specific regulatory proteins to the basal RNA polymerase II transcription machinery. Mediator is recruited to promoters by direct interactions with regulatory proteins and serves as a scaffold for the assembly of a functional preinitiation complex with RNA polymerase II and the general transcription factors. The protein is Mediator of RNA polymerase II transcription subunit 8 (med8) of Aspergillus oryzae (strain ATCC 42149 / RIB 40) (Yellow koji mold).